We begin with the raw amino-acid sequence, 74 residues long: Large ribosomal subunit protein bL28 (74 aa).

This sequence belongs to the bacterial ribosomal protein bL28 family.

This is Large ribosomal subunit protein bL28 from Desulforapulum autotrophicum (strain ATCC 43914 / DSM 3382 / VKM B-1955 / HRM2) (Desulfobacterium autotrophicum).